Consider the following 902-residue polypeptide: Translation initiation factor IF-2 (902 aa).

Over residues 137–177 (NLDEQQRLAESDRARDEAIQRKRDEEQAAKDRVEAERKAAE) the composition is skewed to basic and acidic residues. 2 disordered regions span residues 137–248 (NLDE…SHVM) and 266–314 (HLSA…ERPT). Composition is skewed to low complexity over residues 178–229 (EAAA…ATPA) and 279–291 (RGKPTGRPGSSSS). The 170-residue stretch at 401 to 570 (SRPPVVTIMG…SLQAEVLELK (170 aa)) folds into the tr-type G domain. A G1 region spans residues 410–417 (GHVDHGKT). Residue 410–417 (GHVDHGKT) participates in GTP binding. Residues 435–439 (GITQH) form a G2 region. Residues 456–459 (DTPG) are G3. GTP is bound by residues 456–460 (DTPGH) and 510–513 (NKID). The tract at residues 510–513 (NKID) is G4. The tract at residues 546–548 (SAK) is G5.

It belongs to the TRAFAC class translation factor GTPase superfamily. Classic translation factor GTPase family. IF-2 subfamily.

It localises to the cytoplasm. One of the essential components for the initiation of protein synthesis. Protects formylmethionyl-tRNA from spontaneous hydrolysis and promotes its binding to the 30S ribosomal subunits. Also involved in the hydrolysis of GTP during the formation of the 70S ribosomal complex. This is Translation initiation factor IF-2 from Xanthomonas campestris pv. campestris (strain 8004).